Reading from the N-terminus, the 474-residue chain is Probable diacyglycerol O-acyltransferase Tgs4 (474 aa).

Catalysis depends on His-135, which acts as the Proton acceptor.

The protein belongs to the long-chain O-acyltransferase family.

It catalyses the reaction an acyl-CoA + a 1,2-diacyl-sn-glycerol = a triacyl-sn-glycerol + CoA. Its pathway is glycerolipid metabolism; triacylglycerol biosynthesis. Functionally, required for maintaining the appropriate mycolic acid composition and permeability of the envelope on its exposure to acidic pH. In Mycobacterium tuberculosis (strain CDC 1551 / Oshkosh), this protein is Probable diacyglycerol O-acyltransferase Tgs4 (tgs4).